We begin with the raw amino-acid sequence, 372 residues long: DNA replication and repair protein RecF (372 aa).

An ATP-binding site is contributed by 30 to 37; it reads GENGQGKT.

It belongs to the RecF family.

The protein localises to the cytoplasm. In terms of biological role, the RecF protein is involved in DNA metabolism; it is required for DNA replication and normal SOS inducibility. RecF binds preferentially to single-stranded, linear DNA. It also seems to bind ATP. In Anaeromyxobacter dehalogenans (strain 2CP-1 / ATCC BAA-258), this protein is DNA replication and repair protein RecF.